The following is a 200-amino-acid chain: DNA-directed RNA polymerase subunit 7-like protein (200 aa).

This sequence belongs to the eukaryotic RPB7/RPC8 RNA polymerase subunit family.

The protein resides in the nucleus. The protein is DNA-directed RNA polymerase subunit 7-like protein (NRPB7L) of Arabidopsis thaliana (Mouse-ear cress).